The primary structure comprises 249 residues: 23S rRNA (guanosine-2'-O-)-methyltransferase RlmB (249 aa).

S-adenosyl-L-methionine contacts are provided by Gly-200, Ile-220, and Leu-229.

Belongs to the class IV-like SAM-binding methyltransferase superfamily. RNA methyltransferase TrmH family. RlmB subfamily.

The protein localises to the cytoplasm. The catalysed reaction is guanosine(2251) in 23S rRNA + S-adenosyl-L-methionine = 2'-O-methylguanosine(2251) in 23S rRNA + S-adenosyl-L-homocysteine + H(+). In terms of biological role, specifically methylates the ribose of guanosine 2251 in 23S rRNA. The chain is 23S rRNA (guanosine-2'-O-)-methyltransferase RlmB from Xylella fastidiosa (strain 9a5c).